We begin with the raw amino-acid sequence, 704 residues long: Elongation factor G (704 aa).

The 283-residue stretch at 8-290 (ARYRNIGISA…AVVDYLPSPV (283 aa)) folds into the tr-type G domain. GTP-binding positions include 17–24 (AHIDAGKT), 88–92 (DTPGH), and 142–145 (NKMD).

Belongs to the TRAFAC class translation factor GTPase superfamily. Classic translation factor GTPase family. EF-G/EF-2 subfamily.

It localises to the cytoplasm. Functionally, catalyzes the GTP-dependent ribosomal translocation step during translation elongation. During this step, the ribosome changes from the pre-translocational (PRE) to the post-translocational (POST) state as the newly formed A-site-bound peptidyl-tRNA and P-site-bound deacylated tRNA move to the P and E sites, respectively. Catalyzes the coordinated movement of the two tRNA molecules, the mRNA and conformational changes in the ribosome. The protein is Elongation factor G of Pectobacterium carotovorum subsp. carotovorum (strain PC1).